A 1363-amino-acid chain; its full sequence is Vascular endothelial growth factor receptor 3 (1363 aa).

The signal sequence occupies residues 1 to 24 (MQRGAALCLRLWLCLGLLDGLVSG). Topologically, residues 25-775 (YSMTPPTLNI…EGSEDKGSME (751 aa)) are extracellular. Ig-like C2-type domains lie at 30–127 (PTLN…TAAS), 151–213 (KDAM…WGDQ), 219–326 (PFLV…TEVI), 331–415 (PFIS…ISLE), 422–552 (PQIH…FYVT), 555–671 (PDGF…KYLS), and 678–764 (PRLT…ASVA). N33, N104, N166, N251, N299, and N411 each carry an N-linked (GlcNAc...) asparagine glycan. Cystine bridges form between C51–C111 and C158–C206. An intrachain disulfide couples C252 to C310. Disulfide bonds link C445-C534, C466-C486, and C578-C653. N-linked (GlcNAc...) asparagine glycans are attached at residues N515, N527, N594, N683, and N690. A disulfide bridge links C699 with C751. N-linked (GlcNAc...) asparagine glycosylation is present at N758. The helical transmembrane segment at 776-796 (IVILVGTGVIAVFFWVLLLLI) threads the bilayer. The Cytoplasmic segment spans residues 797–1363 (FCNMRRPAHA…RVTFFTDNSY (567 aa)). Y830, Y833, and Y853 each carry phosphotyrosine; by SRC. The 329-residue stretch at 845–1173 (LHLGRVLGYG…ELVEILGDLL (329 aa)) folds into the Protein kinase domain. Residues 851-859 (LGYGAFGKV) and K879 each bind ATP. The Proton acceptor role is filled by D1037. Phosphotyrosine; by autocatalysis and SRC is present on Y1063. Y1068, Y1230, Y1231, and Y1265 each carry phosphotyrosine; by autocatalysis. A disordered region spans residues 1291–1331 (HRQESGFSCKGPGQNVAVTRAHPDSQGRRRRPERGARGGQV). Residues Y1333 and Y1337 each carry the phosphotyrosine; by autocatalysis and SRC modification. Y1363 carries the phosphotyrosine; by autocatalysis modification.

It belongs to the protein kinase superfamily. Tyr protein kinase family. CSF-1/PDGF receptor subfamily. In terms of assembly, interacts with VEGFC and VEGFD. Monomer in the absence of bound VEGFC or VEGFD. Homodimer in the presence of bound VEGFC or VEGFD. Can also form a heterodimer with KDR. Interacts with PTPN14; the interaction is enhanced by stimulation with VEGFC. Interacts with CRK, GRB2, PTK2/FAK1, SHC1, PIK3R1 and PTPN11/SHP-2. Identified in a complex with SRC and ITGB1. Autophosphorylated on tyrosine residues upon ligand binding. Autophosphorylation occurs in trans, i.e. one subunit of the dimeric receptor phosphorylates tyrosine residues on the other subunit. Phosphorylation in response to H(2)O(2) is mediated by a process that requires SRC and PRKCD activity. Phosphorylation at Tyr-1068 is required for autophosphorylation at additional tyrosine residues. Phosphorylation at Tyr-1063 and Tyr-1337 is important for interaction with CRK and subsequent activation of MAPK8. Phosphorylation at Tyr-1230, Tyr-1231 and Tyr-1337 is important for interaction with GRB2 and subsequent activation of the AKT1 and MAPK1/ERK2 and/or MAPK3/ERK1 signaling pathways. In response to endothelial cell adhesion onto collagen, can also be phosphorylated in the absence of FLT4 kinase activity by SRC at Tyr-830, Tyr-833, Tyr-853, Tyr-1063, Tyr-1333, and Tyr-1337. As to expression, detected in endothelial cells (at protein level). Widely expressed. Detected in fetal spleen, lung and brain. Detected in adult liver, muscle, thymus, placenta, lung, testis, ovary, prostate, heart, and kidney.

Its subcellular location is the cell membrane. The protein localises to the cytoplasm. It is found in the nucleus. The protein resides in the secreted. The catalysed reaction is L-tyrosyl-[protein] + ATP = O-phospho-L-tyrosyl-[protein] + ADP + H(+). Its activity is regulated as follows. Present in an inactive conformation in the absence of bound ligand. Binding of VEGFC or VEGFD leads to dimerization and activation by autophosphorylation on tyrosine residues. Inhibited by MAZ51. Tyrosine-protein kinase that acts as a cell-surface receptor for VEGFC and VEGFD, and plays an essential role in adult lymphangiogenesis and in the development of the vascular network and the cardiovascular system during embryonic development. Promotes proliferation, survival and migration of endothelial cells, and regulates angiogenic sprouting. Signaling by activated FLT4 leads to enhanced production of VEGFC, and to a lesser degree VEGFA, thereby creating a positive feedback loop that enhances FLT4 signaling. Modulates KDR signaling by forming heterodimers. The secreted isoform 3 may function as a decoy receptor for VEGFC and/or VEGFD and play an important role as a negative regulator of VEGFC-mediated lymphangiogenesis and angiogenesis. Binding of vascular growth factors to isoform 1 or isoform 2 leads to the activation of several signaling cascades; isoform 2 seems to be less efficient in signal transduction, because it has a truncated C-terminus and therefore lacks several phosphorylation sites. Mediates activation of the MAPK1/ERK2, MAPK3/ERK1 signaling pathway, of MAPK8 and the JUN signaling pathway, and of the AKT1 signaling pathway. Phosphorylates SHC1. Mediates phosphorylation of PIK3R1, the regulatory subunit of phosphatidylinositol 3-kinase. Promotes phosphorylation of MAPK8 at 'Thr-183' and 'Tyr-185', and of AKT1 at 'Ser-473'. The protein is Vascular endothelial growth factor receptor 3 (FLT4) of Homo sapiens (Human).